The following is a 332-amino-acid chain: Aquaporin-7-1 (332 aa).

Residues 1-66 lie on the Cytoplasmic side of the membrane; the sequence is MSGQHQITEQ…RHAIRMPMAE (66 aa). The helical transmembrane segment at 67–87 threads the bilayer; that stretch reads FFGVALLIIFGAGSACQVVLS. The Extracellular portion of the chain corresponds to 88–100; it reads TNPNVASSDRGSF. A helical transmembrane segment spans residues 101 to 121; that stretch reads LSINLGWAIGIAMGAWVSGGI. The Cytoplasmic portion of the chain corresponds to 122-144; it reads SGGHINPAITIAMATYRGFPWRR. An NPA 1 motif is present at residues 127-129; that stretch reads NPA. Residues 145 to 165 form a helical membrane-spanning segment; that stretch reads VPSYIFAQVLGGVVGAALVYA. Residues 166-199 are Extracellular-facing; sequence NYIHAIDIFEGGRHVRTQATASLFATYALPYMTQ. The chain crosses the membrane as a helical span at residues 200–220; the sequence is VSCFFSEFLATAVLSMMVLAL. The Cytoplasmic portion of the chain corresponds to 221 to 230; the sequence is TDNRNGAPTN. Residues 231 to 251 form a helical membrane-spanning segment; the sequence is GLLPFALFVLFIGLGASLGME. Over 252–283 the chain is Extracellular; that stretch reads TAYALNPARDFGPRLFLAMSGYGKALFNYRSQ. The NPA 2 motif lies at 257-259; it reads NPA. The helical transmembrane segment at 284-304 threads the bilayer; that stretch reads YWLWAPIIAPVLGAQAGGLLY. Residues 305–332 are Cytoplasmic-facing; it reads DTFLYDGDNSPIKWRRASSQECQLAEVV.

This sequence belongs to the MIP/aquaporin (TC 1.A.8) family.

The protein resides in the membrane. The catalysed reaction is H2O(in) = H2O(out). Water channel required to facilitate the transport of water across membranes. Does not mediate the transport carbon dioxide across the membrane. This Laccaria bicolor (Bicoloured deceiver) protein is Aquaporin-7-1.